A 340-amino-acid polypeptide reads, in one-letter code: MVEQIKDKLGRPIRDLRLSVTDRCNFRCDYCMPKEVFGDDFVFLPKNELLTFDEMARIAKVYAELGVKKIRITGGEPLMRRDLDVLIAKLNQIDGIEDIGLTTNGLLLKKHGQKLYDAGLRRINVSLDAIDDTLFQSINNCNIKATTILEQIDYATSIGLNVKVNVVIQKGINDDQIIPMLEYFKDKHIEIRFIEFMDVGNDNGWDFSKVVTKDDMLTMIEQHFEIDPVEPKYFGEVAKYYRHKDNGVQFGLITSVSQSFCSTCTRARLSSDGKFYGCLFATVDGFNVKAFIRSGVTDEELKEQFKALWQIRDDRYSDERTAQTVANRQRKKINMNYIGG.

In terms of domain architecture, Radical SAM core spans 8–230 (KLGRPIRDLR…EQHFEIDPVE (223 aa)). Arg17 contacts GTP. 2 residues coordinate [4Fe-4S] cluster: Cys24 and Cys28. Tyr30 contacts S-adenosyl-L-methionine. Cys31 contributes to the [4Fe-4S] cluster binding site. A GTP-binding site is contributed by Arg71. Residue Gly75 participates in S-adenosyl-L-methionine binding. Thr102 contributes to the GTP binding site. Residue Ser126 coordinates S-adenosyl-L-methionine. GTP is bound at residue Lys163. Met197 contacts S-adenosyl-L-methionine. The [4Fe-4S] cluster site is built by Cys261 and Cys264. Position 266–268 (266–268 (RAR)) interacts with GTP. Cys278 provides a ligand contact to [4Fe-4S] cluster.

It belongs to the radical SAM superfamily. MoaA family. As to quaternary structure, monomer and homodimer. [4Fe-4S] cluster is required as a cofactor.

The enzyme catalyses GTP + AH2 + S-adenosyl-L-methionine = (8S)-3',8-cyclo-7,8-dihydroguanosine 5'-triphosphate + 5'-deoxyadenosine + L-methionine + A + H(+). It functions in the pathway cofactor biosynthesis; molybdopterin biosynthesis. In terms of biological role, catalyzes the cyclization of GTP to (8S)-3',8-cyclo-7,8-dihydroguanosine 5'-triphosphate. The chain is GTP 3',8-cyclase from Staphylococcus aureus (strain bovine RF122 / ET3-1).